Here is a 236-residue protein sequence, read N- to C-terminus: 2-C-methyl-D-erythritol 4-phosphate cytidylyltransferase (236 aa).

The protein belongs to the IspD/TarI cytidylyltransferase family. IspD subfamily.

It catalyses the reaction 2-C-methyl-D-erythritol 4-phosphate + CTP + H(+) = 4-CDP-2-C-methyl-D-erythritol + diphosphate. It functions in the pathway isoprenoid biosynthesis; isopentenyl diphosphate biosynthesis via DXP pathway; isopentenyl diphosphate from 1-deoxy-D-xylulose 5-phosphate: step 2/6. Functionally, catalyzes the formation of 4-diphosphocytidyl-2-C-methyl-D-erythritol from CTP and 2-C-methyl-D-erythritol 4-phosphate (MEP). This is 2-C-methyl-D-erythritol 4-phosphate cytidylyltransferase from Pseudomonas syringae pv. syringae (strain B728a).